Consider the following 282-residue polypeptide: Probable endonuclease 4 (282 aa).

Zn(2+) is bound by residues His-70, His-110, Glu-146, Asp-180, His-183, His-217, Asp-230, His-232, and Glu-262.

This sequence belongs to the AP endonuclease 2 family. Zn(2+) serves as cofactor.

The catalysed reaction is Endonucleolytic cleavage to 5'-phosphooligonucleotide end-products.. In terms of biological role, endonuclease IV plays a role in DNA repair. It cleaves phosphodiester bonds at apurinic or apyrimidinic (AP) sites, generating a 3'-hydroxyl group and a 5'-terminal sugar phosphate. The sequence is that of Probable endonuclease 4 from Wolinella succinogenes (strain ATCC 29543 / DSM 1740 / CCUG 13145 / JCM 31913 / LMG 7466 / NCTC 11488 / FDC 602W) (Vibrio succinogenes).